We begin with the raw amino-acid sequence, 81 residues long: Photosystem I iron-sulfur center (81 aa).

4Fe-4S ferredoxin-type domains follow at residues Ser-2–Trp-31 and Gly-37–Tyr-68. Cys-11, Cys-14, Cys-17, Cys-21, Cys-48, Cys-51, Cys-54, and Cys-58 together coordinate [4Fe-4S] cluster.

In terms of assembly, the cyanobacterial PSI reaction center is composed of one copy each of PsaA,B,C,D,E,F,I,J,K,L,M and X, and forms trimeric complexes. [4Fe-4S] cluster is required as a cofactor.

The protein resides in the cellular thylakoid membrane. It carries out the reaction reduced [plastocyanin] + hnu + oxidized [2Fe-2S]-[ferredoxin] = oxidized [plastocyanin] + reduced [2Fe-2S]-[ferredoxin]. Functionally, apoprotein for the two 4Fe-4S centers FA and FB of photosystem I (PSI); essential for photochemical activity. FB is the terminal electron acceptor of PSI, donating electrons to ferredoxin. The C-terminus interacts with PsaA/B/D and helps assemble the protein into the PSI complex. Required for binding of PsaD and PsaE to PSI. PSI is a plastocyanin/cytochrome c6-ferredoxin oxidoreductase, converting photonic excitation into a charge separation, which transfers an electron from the donor P700 chlorophyll pair to the spectroscopically characterized acceptors A0, A1, FX, FA and FB in turn. The sequence is that of Photosystem I iron-sulfur center from Synechococcus sp. (strain WH7803).